The following is an 84-amino-acid chain: Beta-cardiotoxin CTX15 (84 aa).

Positions 1 to 21 (MKTLLLTLVVVTIVCLDLGYT) are cleaved as a signal peptide. Intrachain disulfides connect Cys-24–Cys-43, Cys-36–Cys-61, Cys-65–Cys-76, and Cys-77–Cys-82.

It belongs to the three-finger toxin family. Short-chain subfamily. Aminergic toxin sub-subfamily. As to expression, expressed by the venom gland.

It is found in the secreted. In terms of biological role, acts as a beta-blocker by binding to beta-1 and beta-2 adrenergic receptors (ADRB1 and ADRB2). It dose-dependently decreases the heart rate (bradycardia), whereas conventional cardiotoxins increases it. At 100 mg/kg, intraperitoneal injection into mice provokes labored breathing, impaired locomotion, lack of response to external stimuli, and death (after 30 minutes). The sequence is that of Beta-cardiotoxin CTX15 from Ophiophagus hannah (King cobra).